A 435-amino-acid polypeptide reads, in one-letter code: E3 ubiquitin-protein ligase RNFT1 (435 aa).

The disordered stretch occupies residues 1 to 62; sequence MPLFLLSLPT…SSEDASTPQC (62 aa). Residues 16–34 are compositionally biased toward basic and acidic residues; sequence GHERRQRPEAKTSGSEKKY. Over residues 40–62 the composition is skewed to polar residues; it reads ANRSQLHSPPGTGSSEDASTPQC. Transmembrane regions (helical) follow at residues 158-178, 203-223, 233-253, 256-276, 298-318, and 323-343; these read ILIL…LGIG, IQCA…YYTF, IFLN…IVGI, FILK…PSFI, TFVP…FGNV, and LGIL…FGHL. Residues 368–419 are required for ubiquitin ligase activity and for protection against ER stress-induced cell death; the sequence is CSDVDDICSICQAEFQKPILLICQHIFCEECMTLWFNREKTCPLCRTVISDH. The RING-type zinc finger occupies 375–413; it reads CSICQAEFQKPILLICQHIFCEECMTLWFNREKTCPLCR.

In terms of tissue distribution, expressed at highest levels in testis, lower levels in heart, liver, lung, and kidney. Not detected in brain, ovary, and uterus. Down-regulated in testis from patients with maturation arrest (MA) or Sertoli cell-only syndrome (SCOS). Ubiquitously expressed with high expression in testis.

The protein resides in the endoplasmic reticulum membrane. It carries out the reaction S-ubiquitinyl-[E2 ubiquitin-conjugating enzyme]-L-cysteine + [acceptor protein]-L-lysine = [E2 ubiquitin-conjugating enzyme]-L-cysteine + N(6)-ubiquitinyl-[acceptor protein]-L-lysine.. The protein operates within protein modification; protein ubiquitination. Functionally, E3 ubiquitin-protein ligase that acts in the endoplasmic reticulum (ER)-associated degradation (ERAD) pathway, which targets misfolded proteins that accumulate in the endoplasmic reticulum (ER) for ubiquitination and subsequent proteasome-mediated degradation. Protects cells from ER stress-induced apoptosis. The protein is E3 ubiquitin-protein ligase RNFT1 (RNFT1) of Homo sapiens (Human).